A 621-amino-acid polypeptide reads, in one-letter code: UvrABC system protein C (621 aa).

Residues Asn-13–Ile-92 enclose the GIY-YIG domain. Residues Arg-204–Ile-239 form the UVR domain.

The protein belongs to the UvrC family. In terms of assembly, interacts with UvrB in an incision complex.

It is found in the cytoplasm. Its function is as follows. The UvrABC repair system catalyzes the recognition and processing of DNA lesions. UvrC both incises the 5' and 3' sides of the lesion. The N-terminal half is responsible for the 3' incision and the C-terminal half is responsible for the 5' incision. This is UvrABC system protein C from Clostridium beijerinckii (strain ATCC 51743 / NCIMB 8052) (Clostridium acetobutylicum).